An 878-amino-acid polypeptide reads, in one-letter code: NUT family member 2E (878 aa).

5 disordered regions span residues 273 to 324 (WSQG…DDSC), 417 to 511 (QKSQ…VPEE), 527 to 560 (LLGP…PPDP), 622 to 757 (RLPP…EEEE), and 775 to 878 (WLPQ…HCSQ). 2 stretches are compositionally biased toward pro residues: residues 278–288 (PLPPPPPPAAQ) and 427–444 (CLPP…PPAP). Basic and acidic residues-rich tracts occupy residues 537–551 (EPEK…KQPQ) and 622–631 (RLPPLKEKQH).

It belongs to the NUT family.

This Homo sapiens (Human) protein is NUT family member 2E (NUTM2E).